The primary structure comprises 471 residues: Cytolysin (471 aa).

Positions 1–20 (MKKMTLFTLSLLATAVQVGA) are cleaved as a signal peptide. A Ricin B-type lectin domain is found at 338–465 (AHVTLQSLSN…EANQARWKPT (128 aa)).

This sequence belongs to the HlyA hemolysin family.

Bacterial hemolysins are exotoxins that attack blood cell membranes and cause cell rupture by mechanisms not clearly defined. The protein is Cytolysin (vvhA) of Vibrio vulnificus (strain CMCP6).